A 449-amino-acid chain; its full sequence is GTPase Der (449 aa).

EngA-type G domains follow at residues 3–167 and 175–350; these read SIVA…PDEP and TNIA…EQYS. Residues 9–16, 56–60, 119–122, 181–188, 228–232, and 293–296 contribute to the GTP site; these read GRPNVGKS, DTGGF, NKVD, DTAGI, and NKWD. Residues 351 to 435 form the KH-like domain; it reads RRVTTSELNR…PFRLLFRGRE (85 aa).

Belongs to the TRAFAC class TrmE-Era-EngA-EngB-Septin-like GTPase superfamily. EngA (Der) GTPase family. In terms of assembly, associates with the 50S ribosomal subunit.

GTPase that plays an essential role in the late steps of ribosome biogenesis. The chain is GTPase Der from Trichlorobacter lovleyi (strain ATCC BAA-1151 / DSM 17278 / SZ) (Geobacter lovleyi).